The following is a 314-amino-acid chain: Methionyl-tRNA formyltransferase (314 aa).

S109–P112 lines the (6S)-5,6,7,8-tetrahydrofolate pocket.

Belongs to the Fmt family.

The enzyme catalyses L-methionyl-tRNA(fMet) + (6R)-10-formyltetrahydrofolate = N-formyl-L-methionyl-tRNA(fMet) + (6S)-5,6,7,8-tetrahydrofolate + H(+). Its function is as follows. Attaches a formyl group to the free amino group of methionyl-tRNA(fMet). The formyl group appears to play a dual role in the initiator identity of N-formylmethionyl-tRNA by promoting its recognition by IF2 and preventing the misappropriation of this tRNA by the elongation apparatus. This Alkaliphilus metalliredigens (strain QYMF) protein is Methionyl-tRNA formyltransferase.